A 370-amino-acid chain; its full sequence is Protein SUPPRESSOR OF NIM1 1 (370 aa).

The region spanning 1–43 (MALPWELEEDILSRLPPISLVRFRTVSKHWNSLFNDKTFINNH) is the F-box domain.

As to expression, ubiquitous, at low levels.

Its function is as follows. Negatively regulates a plant defense signaling pathway which is independent of salicylic acid (SA) and systemic acquired resistance (SAR). Confers sensitivity to P.syringae and P.parasitica. The chain is Protein SUPPRESSOR OF NIM1 1 (SON1) from Arabidopsis thaliana (Mouse-ear cress).